The following is a 264-amino-acid chain: Protein-L-isoaspartate O-methyltransferase (264 aa).

Residues 1–49 (MRKPVGSKDGSGVYSRQGLDGYTPANSNTRISTATLPRPEPLRPAASSA) form a disordered region. Over residues 24-35 (PANSNTRISTAT) the composition is skewed to polar residues. Residue S112 is part of the active site.

This sequence belongs to the methyltransferase superfamily. L-isoaspartyl/D-aspartyl protein methyltransferase family.

The protein localises to the cytoplasm. The catalysed reaction is [protein]-L-isoaspartate + S-adenosyl-L-methionine = [protein]-L-isoaspartate alpha-methyl ester + S-adenosyl-L-homocysteine. Its function is as follows. Catalyzes the methyl esterification of L-isoaspartyl residues in peptides and proteins that result from spontaneous decomposition of normal L-aspartyl and L-asparaginyl residues. It plays a role in the repair and/or degradation of damaged proteins. The sequence is that of Protein-L-isoaspartate O-methyltransferase from Bordetella avium (strain 197N).